An 85-amino-acid chain; its full sequence is Large ribosomal subunit protein bL27 (85 aa).

It belongs to the bacterial ribosomal protein bL27 family.

The polypeptide is Large ribosomal subunit protein bL27 (Campylobacter curvus (strain 525.92)).